Reading from the N-terminus, the 622-residue chain is Peptidoglycan O-acetyltransferase OatA (622 aa).

A run of 11 helical transmembrane segments spans residues 11-31, 39-59, 81-101, 143-163, 173-193, 212-232, 237-257, 267-287, 307-327, 334-354, and 387-407; these read YVPS…AYHL, GFIG…NILL, LIPA…FFHP, LWSL…LLVF, LLKI…ILYV, LLSG…PVVP, AVLN…TAFV, GGLL…SHPA, YGIY…LEIT, AILQ…FIET, and IAGV…VLSV. The tract at residues 412-467 is disordered; the sequence is EKQQTSVKTTTSTPDEKKDDKKEDKATKDKEADSNKASEQKETQKPDNKNKSAATP. A compositionally biased stretch (low complexity) spans 413–424; that stretch reads KQQTSVKTTTST. Over residues 425–461 the composition is skewed to basic and acidic residues; the sequence is PDEKKDDKKEDKATKDKEADSNKASEQKETQKPDNKN. Catalysis depends on residues Ser480, Asp600, and His603.

This sequence belongs to the acyltransferase 3 family.

It is found in the cell membrane. It localises to the secreted. The protein resides in the cell wall. Responsible for O-acetylation at the C6-hydroxyl group of N-acetylmuramyl residues, forming the corresponding N,6-O-diacetylmuramic acid of the peptidoglycan. O-acetylation of the peptidoglycan is the major determinant for lysozyme resistance. Critical for virulence and escape from innate immune response of the host. Involved at both early and later stages of listeriosis in the mouse model of infection. Required for successful host colonization and for intracellular survival of bacteria in macrophages of the infected host. Controls the production of inflammatory mediators in the liver of the infected host. Confers resistance to host antimicrobial molecules and to cell wall-targeting molecules such as beta-lactam antibiotics and bacteriocins. This is Peptidoglycan O-acetyltransferase OatA from Listeria monocytogenes serovar 1/2a (strain ATCC BAA-679 / EGD-e).